An 83-amino-acid polypeptide reads, in one-letter code: Beta-defensin 119 (83 aa).

An N-terminal signal peptide occupies residues 1–20; it reads MKFLFLFLAILLAMEPVVSG. Disulfide bonds link Cys27-Cys54, Cys34-Cys48, and Cys38-Cys55.

This sequence belongs to the beta-defensin family.

It localises to the secreted. In terms of biological role, has antibacterial activity. The polypeptide is Beta-defensin 119 (DEFB119) (Bos taurus (Bovine)).